An 89-amino-acid chain; its full sequence is Small ribosomal subunit protein uS15 (89 aa).

It belongs to the universal ribosomal protein uS15 family. Part of the 30S ribosomal subunit. Forms a bridge to the 50S subunit in the 70S ribosome, contacting the 23S rRNA.

In terms of biological role, one of the primary rRNA binding proteins, it binds directly to 16S rRNA where it helps nucleate assembly of the platform of the 30S subunit by binding and bridging several RNA helices of the 16S rRNA. Its function is as follows. Forms an intersubunit bridge (bridge B4) with the 23S rRNA of the 50S subunit in the ribosome. The chain is Small ribosomal subunit protein uS15 from Acidiphilium cryptum (strain JF-5).